The chain runs to 180 residues: Small ribosomal subunit protein uS5 (180 aa).

The region spanning 24 to 87 (MIEKLVAVNR…EQARKNLVSV (64 aa)) is the S5 DRBM domain.

It belongs to the universal ribosomal protein uS5 family. As to quaternary structure, part of the 30S ribosomal subunit. Contacts proteins S4 and S8.

In terms of biological role, with S4 and S12 plays an important role in translational accuracy. Located at the back of the 30S subunit body where it stabilizes the conformation of the head with respect to the body. The sequence is that of Small ribosomal subunit protein uS5 from Stenotrophomonas maltophilia (strain R551-3).